Consider the following 382-residue polypeptide: Putative acetyl-CoA C-acetyltransferase VraB (382 aa).

The active-site Acyl-thioester intermediate is the Cys-86. Catalysis depends on His-338, which acts as the Proton acceptor.

It belongs to the thiolase-like superfamily. Thiolase family.

This is Putative acetyl-CoA C-acetyltransferase VraB (vraB) from Staphylococcus epidermidis (strain ATCC 12228 / FDA PCI 1200).